Here is a 102-residue protein sequence, read N- to C-terminus: NADH-quinone oxidoreductase subunit K (102 aa).

A run of 3 helical transmembrane segments spans residues 6 to 26, 30 to 50, and 65 to 85; these read MEHGLLLAAVLFCIGLCGLLI, LLFILMSIEIMMNASALAFVV, and ILVISLAAAEASIGLALLLLL.

Belongs to the complex I subunit 4L family. NDH-1 is composed of 14 different subunits. Subunits NuoA, H, J, K, L, M, N constitute the membrane sector of the complex.

The protein resides in the cell inner membrane. The enzyme catalyses a quinone + NADH + 5 H(+)(in) = a quinol + NAD(+) + 4 H(+)(out). NDH-1 shuttles electrons from NADH, via FMN and iron-sulfur (Fe-S) centers, to quinones in the respiratory chain. The immediate electron acceptor for the enzyme in this species is believed to be ubiquinone. Couples the redox reaction to proton translocation (for every two electrons transferred, four hydrogen ions are translocated across the cytoplasmic membrane), and thus conserves the redox energy in a proton gradient. The sequence is that of NADH-quinone oxidoreductase subunit K from Aeromonas hydrophila subsp. hydrophila (strain ATCC 7966 / DSM 30187 / BCRC 13018 / CCUG 14551 / JCM 1027 / KCTC 2358 / NCIMB 9240 / NCTC 8049).